The sequence spans 321 residues: Lipoyl synthase (321 aa).

[4Fe-4S] cluster is bound by residues Cys-68, Cys-73, Cys-79, Cys-94, Cys-98, Cys-101, and Ser-308. The Radical SAM core domain maps to 80–297 (FNHGTATFMI…KEIALELGFT (218 aa)).

Belongs to the radical SAM superfamily. Lipoyl synthase family. Requires [4Fe-4S] cluster as cofactor.

The protein localises to the cytoplasm. It catalyses the reaction [[Fe-S] cluster scaffold protein carrying a second [4Fe-4S](2+) cluster] + N(6)-octanoyl-L-lysyl-[protein] + 2 oxidized [2Fe-2S]-[ferredoxin] + 2 S-adenosyl-L-methionine + 4 H(+) = [[Fe-S] cluster scaffold protein] + N(6)-[(R)-dihydrolipoyl]-L-lysyl-[protein] + 4 Fe(3+) + 2 hydrogen sulfide + 2 5'-deoxyadenosine + 2 L-methionine + 2 reduced [2Fe-2S]-[ferredoxin]. It participates in protein modification; protein lipoylation via endogenous pathway; protein N(6)-(lipoyl)lysine from octanoyl-[acyl-carrier-protein]: step 2/2. Functionally, catalyzes the radical-mediated insertion of two sulfur atoms into the C-6 and C-8 positions of the octanoyl moiety bound to the lipoyl domains of lipoate-dependent enzymes, thereby converting the octanoylated domains into lipoylated derivatives. The polypeptide is Lipoyl synthase (Aliivibrio fischeri (strain MJ11) (Vibrio fischeri)).